The primary structure comprises 485 residues: Ribulose bisphosphate carboxylase large chain (485 aa).

Residues Asn-124 and Thr-174 each contribute to the substrate site. The Proton acceptor role is filled by Lys-176. Residue Lys-178 coordinates substrate. Positions 202, 204, and 205 each coordinate Mg(2+). Lys-202 carries the post-translational modification N6-carboxylysine. His-294 (proton acceptor) is an active-site residue. Positions 295, 327, and 379 each coordinate substrate.

Belongs to the RuBisCO large chain family. Type I subfamily. In terms of assembly, heterohexadecamer of 8 large chains and 8 small chains. Mg(2+) is required as a cofactor.

The catalysed reaction is 2 (2R)-3-phosphoglycerate + 2 H(+) = D-ribulose 1,5-bisphosphate + CO2 + H2O. The enzyme catalyses D-ribulose 1,5-bisphosphate + O2 = 2-phosphoglycolate + (2R)-3-phosphoglycerate + 2 H(+). RuBisCO catalyzes two reactions: the carboxylation of D-ribulose 1,5-bisphosphate, the primary event in carbon dioxide fixation, as well as the oxidative fragmentation of the pentose substrate. Both reactions occur simultaneously and in competition at the same active site. The protein is Ribulose bisphosphate carboxylase large chain of Rhodopseudomonas palustris (strain BisA53).